We begin with the raw amino-acid sequence, 372 residues long: Tomoregulin-1 (372 aa).

The N-terminal stretch at 1–36 (MGAQAPLRLPAAPPLAVCGYTSVLLLFAFCLPGSRA) is a signal peptide. At 37–322 (SNQPAGGGGD…VPSRQKLTHV (286 aa)) the chain is on the extracellular side. An N-linked (GlcNAc...) asparagine glycan is attached at Asn55. The Kazal-like 1 domain occupies 90 to 137 (ACQFQCHTNYIPVCGSNGDTYQNECFLRRAACKHQKDITVVARGPCYS). Cystine bridges form between Cys91–Cys121, Cys95–Cys114, and Cys103–Cys135. Residue Asn139 is glycosylated (N-linked (GlcNAc...) asparagine). The disordered stretch occupies residues 139 to 161 (NGSGSGEGEEEGSGAGAHRKHSK). A Kazal-like 2 domain is found at 181 to 229 (VCNIDCSGYSFNPVCASDGSSYNNPCFVREASCIKQEQIDIRHLGHCTD). Intrachain disulfides connect Cys182–Cys213, Cys186–Cys206, Cys195–Cys227, Cys267–Cys280, Cys275–Cys291, and Cys293–Cys302. One can recognise an EGF-like domain in the interval 263-303 (SHMPCPENLNGYCIHGKCEFIYSTQKASCRCESGYTGQHCE). The chain crosses the membrane as a helical span at residues 323-343 (LIAAIIGAVQIAIIVAIVMCI). Residues 344 to 372 (TRKCPKNNRGRRQKQNLGHFTSDTSSRMV) are Cytoplasmic-facing. Residues 351–372 (NRGRRQKQNLGHFTSDTSSRMV) form a disordered region. Polar residues predominate over residues 358-372 (QNLGHFTSDTSSRMV).

The protein belongs to the tomoregulin family. May interact with ST14. As to expression, maily expressed in neurons. Expressed in brain, neurointermediate lobe, pars distalis, pancreas, ovary and testis.

The protein localises to the cell membrane. Functionally, neuron-specific restriction factor that prevents herpes simplex virus 1 (HHV-1) infection in the brain by blocking viral entry. Also able to restrict herpes simplex virus 2 (HHV-2) infection, although to a lesser extent. Acts by preventing the association between the viral glycoprotein D (gD) and its cell surface receptor NECTIN1, thereby inhibiting fusion of the virus and the cell membrane. Also able to prevent the association between the viral glycoprotein B (gB) and MYH9/NMMHC-IIA and MYH10/NMMHC-IIB receptors. This is Tomoregulin-1 from Mus musculus (Mouse).